The chain runs to 200 residues: Potassium-transporting ATPase KdpC subunit (200 aa).

The helical transmembrane segment at 13–33 (ITLIFWLITAIIYPLAILVVG) threads the bilayer.

This sequence belongs to the KdpC family. The system is composed of three essential subunits: KdpA, KdpB and KdpC.

The protein localises to the cell membrane. Its function is as follows. Part of the high-affinity ATP-driven potassium transport (or Kdp) system, which catalyzes the hydrolysis of ATP coupled with the electrogenic transport of potassium into the cytoplasm. This subunit acts as a catalytic chaperone that increases the ATP-binding affinity of the ATP-hydrolyzing subunit KdpB by the formation of a transient KdpB/KdpC/ATP ternary complex. In Anabaena sp. (strain L31), this protein is Potassium-transporting ATPase KdpC subunit.